The sequence spans 222 residues: CEACAM1-like protein UL7 (222 aa).

N-linked (GlcNAc...) asparagine; by host glycans are attached at residues Asn-50, Asn-56, Asn-60, Asn-71, Asn-105, Asn-109, Asn-125, Asn-132, Asn-147, Asn-164, Asn-168, and Asn-189. The helical transmembrane segment at 193 to 213 threads the bilayer; that stretch reads LALVGVVVFLVLIVVCIMGWW.

The protein belongs to the RL11 family. Highly glycosylated.

Its subcellular location is the secreted. It is found in the host cell membrane. Plays a role in modulating the host immune response and affecting host cytokine production. Structurally and functionally homolog of host CEACAM1, induces endothelial cell angiogenesis. The sequence is that of CEACAM1-like protein UL7 (UL7) from Homo sapiens (Human).